A 1191-amino-acid chain; its full sequence is DNA topoisomerase 2 (1191 aa).

Residues Asn-64, Asn-95, and 142-149 (GTNGVGLK) contribute to the ATP site. Glu-437, Asp-538, and Asp-540 together coordinate Mg(2+). Residues 706–1173 (IPNFLDGMTR…PGASVWLEEI (468 aa)) enclose the Topo IIA-type catalytic domain. Catalysis depends on Tyr-799, which acts as the O-(5'-phospho-DNA)-tyrosine intermediate.

The protein belongs to the type II topoisomerase family. Requires Mg(2+) as cofactor. The cofactor is Mn(2+). Ca(2+) serves as cofactor.

It localises to the host cytoplasm. It carries out the reaction ATP-dependent breakage, passage and rejoining of double-stranded DNA.. Its function is as follows. Type II topoisomerase. Processively relaxes supercoiled DNA. Displays DNA-supercoiling activity only when associated with the viral histone-like protein. This is DNA topoisomerase 2 from Ornithodoros (relapsing fever ticks).